The chain runs to 181 residues: Large ribosomal subunit protein uL5 (181 aa).

This sequence belongs to the universal ribosomal protein uL5 family. Part of the 50S ribosomal subunit; contacts the 5S rRNA and probably tRNA. Forms a bridge to the 30S subunit in the 70S ribosome.

This is one of the proteins that bind and probably mediate the attachment of the 5S RNA into the large ribosomal subunit, where it forms part of the central protuberance. In the 70S ribosome it contacts protein S13 of the 30S subunit (bridge B1b), connecting the 2 subunits; this bridge is implicated in subunit movement. May contact the P site tRNA; the 5S rRNA and some of its associated proteins might help stabilize positioning of ribosome-bound tRNAs. The sequence is that of Large ribosomal subunit protein uL5 from Methanococcus maripaludis (strain C6 / ATCC BAA-1332).